Reading from the N-terminus, the 147-residue chain is Hemoglobin subunit beta-2 (147 aa).

Residues 3 to 147 (EWTDEERTII…VVSALGRQYH (145 aa)) enclose the Globin domain. Residues His-64 and His-93 each coordinate heme b.

The protein belongs to the globin family. Hb 2 is a heterotetramer of two alpha-2 and two beta-2 chains. Hb 3 is a heterotetramer of two alpha-1 and two beta-2 chains. As to expression, red blood cells.

Involved in oxygen transport from gills to the various peripheral tissues. This chain is Hemoglobin subunit beta-2 (hbb2), found in Gadus morhua (Atlantic cod).